A 1015-amino-acid polypeptide reads, in one-letter code: Cytosolic carboxypeptidase 1 (1015 aa).

The tract at residues 384–462 (LPTATPSTPG…GALPKTTRLN (79 aa)) is disordered. Over residues 416–451 (EDGMDEEDEAFVRDDDDEGKDDRGSDDDDGKDDDEI) the composition is skewed to acidic residues. In terms of domain architecture, Peptidase M14 spans 727–1013 (YPYTYSFLNS…DLLHSFLEMT (287 aa)). Zn(2+) is bound by residues H792, E795, and H891. Residue E977 is the Proton donor/acceptor of the active site.

It belongs to the peptidase M14 family. Requires Zn(2+) as cofactor. In hermaphrodites and males, expressed in amphid and IL2 ciliated sensory neurons. In males, expressed in CEM head neurons, RnB and HOB tail neurons, and in gubernacular erector and retractor muscles.

Its subcellular location is the perikaryon. The protein resides in the cell projection. It is found in the cilium. It localises to the dendrite. Catalyzes the deglutamylation of polyglutamate side chains generated by post-translational polyglutamylation of proteins such as tubulins. Via the deglutamylation of tubulin, regulates the localization and velocity of kinesin motors and the structural integrity of microtubules in sensory cilia. In male CEM sensory neurons, regulates the cilia release of bioactive extracellular vesicles. Also regulates microtubule dynamics in uterine muscle cells. This is Cytosolic carboxypeptidase 1 from Caenorhabditis elegans.